The primary structure comprises 247 residues: MASQPPEEPAEFQVSDELECKICYNRYNLKQRKPKVLECCHRVCAKCLYKIIDFGDSPQGVIVCPFCRFETCLPDDEVSSLPDDNNILVNLTCGSKGKKCLPENPTELLLTPKRLASLVSPSHTSSNCLVITIMEVQRESSPSLSSTPVVEFYRPASFDSVTTVSHNWTVWNCTSLLFQTSIRVLVWLLGLLYFSSLPLGIYLLVSKKVTLGVVFVSLVPSSLVILMVYGFCQCVCHEFLDCMALPS.

Residues 20-68 (CKICYNRYNLKQRKPKVLECCHRVCAKCLYKIIDFGDSPQGVIVCPFCR) form an RING-type zinc finger. Helical transmembrane passes span 184–204 (VLVW…IYLL) and 211–231 (LGVV…VYGF).

As to quaternary structure, interacts with ATP6V0C.

It is found in the membrane. It localises to the cytoplasm. It catalyses the reaction S-ubiquitinyl-[E2 ubiquitin-conjugating enzyme]-L-cysteine + [acceptor protein]-L-lysine = [E2 ubiquitin-conjugating enzyme]-L-cysteine + N(6)-ubiquitinyl-[acceptor protein]-L-lysine.. The protein operates within protein modification; protein ubiquitination. Its function is as follows. E3 ubiquitin-protein ligase that mediates the ubiquitination of ATP6V0C and targets it to degradation via the ubiquitin-proteasome pathway. Also plays a role in the inhibition of TLR-triggered innate immune response by mediating 'Lys'-48-linked ubiquitination and subsequent degradation of NF-kappa-B component RELA. The sequence is that of E3 ubiquitin-protein ligase RNF182 (Rnf182) from Rattus norvegicus (Rat).